The following is a 629-amino-acid chain: tRNA uridine 5-carboxymethylaminomethyl modification enzyme MnmG (629 aa).

FAD is bound by residues 13-18 (GGGHAG), V125, and S180. Position 273 to 287 (273 to 287 (GPRYCPSIEDKVMRF)) interacts with NAD(+). Q370 provides a ligand contact to FAD.

It belongs to the MnmG family. As to quaternary structure, homodimer. Heterotetramer of two MnmE and two MnmG subunits. FAD serves as cofactor.

It is found in the cytoplasm. NAD-binding protein involved in the addition of a carboxymethylaminomethyl (cmnm) group at the wobble position (U34) of certain tRNAs, forming tRNA-cmnm(5)s(2)U34. The polypeptide is tRNA uridine 5-carboxymethylaminomethyl modification enzyme MnmG (Salmonella arizonae (strain ATCC BAA-731 / CDC346-86 / RSK2980)).